The sequence spans 547 residues: RING finger protein ETP1 homolog (547 aa).

The RING-type zinc-finger motif lies at 208 to 248 (CVVCLERMDSSITGLITIVCQHTFHCPCLQKWGNSSCPVCR). The UBP-type; degenerate zinc finger occupies 245 to 338 (PVCRYTQKVQ…GKLVELSTDG (94 aa)). Residues C262, C265, C274, C277, C282, H289, H293, and H299 each coordinate Zn(2+). Positions 514 to 523 (LPNNSTVRSN) are enriched in polar residues. Positions 514-547 (LPNNSTVRSNSVKSKKKKKKKPVVPSSSGSLGTD) are disordered. A compositionally biased stretch (basic residues) spans 526 to 535 (KSKKKKKKKP).

It localises to the cytoplasm. Functionally, may act as a cytoplasmic retention protein with a role in regulating nuclear transport. In Schizosaccharomyces pombe (strain 972 / ATCC 24843) (Fission yeast), this protein is RING finger protein ETP1 homolog.